The sequence spans 360 residues: Phospho-N-acetylmuramoyl-pentapeptide-transferase (360 aa).

10 helical membrane-spanning segments follow: residues 25–45 (RGILSVLTALSLSLWLGPWMI), 73–93 (TMGGALILTAIAISTLLWADL), 97–117 (YVWVVLVVTLLFGAIGWVDDY), 142–162 (IGAAVFLYMTAETPIETTLIV), 167–187 (SVEIQLGIFFVVLTYFVIVGS), 199–219 (GLAIMPTVMVAGALGIFCYLS), 236–256 (AGELIVFCAALVGAGLGFLWF), 263–283 (VFMGDVGALALGAALGTIAVI), 288–308 (IVLFIMGGVFVMETLSVMIQV), and 338–358 (VIVRFWIITVILVLIGLATLK).

Belongs to the glycosyltransferase 4 family. MraY subfamily. Mg(2+) serves as cofactor.

The protein localises to the cell inner membrane. It catalyses the reaction UDP-N-acetyl-alpha-D-muramoyl-L-alanyl-gamma-D-glutamyl-meso-2,6-diaminopimeloyl-D-alanyl-D-alanine + di-trans,octa-cis-undecaprenyl phosphate = di-trans,octa-cis-undecaprenyl diphospho-N-acetyl-alpha-D-muramoyl-L-alanyl-D-glutamyl-meso-2,6-diaminopimeloyl-D-alanyl-D-alanine + UMP. It functions in the pathway cell wall biogenesis; peptidoglycan biosynthesis. Its function is as follows. Catalyzes the initial step of the lipid cycle reactions in the biosynthesis of the cell wall peptidoglycan: transfers peptidoglycan precursor phospho-MurNAc-pentapeptide from UDP-MurNAc-pentapeptide onto the lipid carrier undecaprenyl phosphate, yielding undecaprenyl-pyrophosphoryl-MurNAc-pentapeptide, known as lipid I. In Pseudomonas aeruginosa (strain LESB58), this protein is Phospho-N-acetylmuramoyl-pentapeptide-transferase.